The following is a 204-amino-acid chain: N-(5'-phosphoribosyl)anthranilate isomerase (204 aa).

Belongs to the TrpF family.

The catalysed reaction is N-(5-phospho-beta-D-ribosyl)anthranilate = 1-(2-carboxyphenylamino)-1-deoxy-D-ribulose 5-phosphate. It functions in the pathway amino-acid biosynthesis; L-tryptophan biosynthesis; L-tryptophan from chorismate: step 3/5. The polypeptide is N-(5'-phosphoribosyl)anthranilate isomerase (Oceanobacillus iheyensis (strain DSM 14371 / CIP 107618 / JCM 11309 / KCTC 3954 / HTE831)).